Reading from the N-terminus, the 501-residue chain is Cytochrome P450 7A1 (501 aa).

Residues 4–24 form a helical membrane-spanning segment; the sequence is ISLLGGIVTAVCCCLWLLLGM. Position 441 (Cys-441) interacts with heme.

This sequence belongs to the cytochrome P450 family. The cofactor is heme.

It localises to the endoplasmic reticulum membrane. The protein localises to the microsome membrane. It catalyses the reaction cholesterol + reduced [NADPH--hemoprotein reductase] + O2 = 7alpha-hydroxycholesterol + oxidized [NADPH--hemoprotein reductase] + H2O + H(+). It carries out the reaction 4beta-hydroxycholesterol + reduced [NADPH--hemoprotein reductase] + O2 = 4beta,7alpha-dihydroxycholesterol + oxidized [NADPH--hemoprotein reductase] + H2O + H(+). The catalysed reaction is lathosterol + reduced [NADPH--hemoprotein reductase] + O2 = 7alpha,8alpha-epoxy-5alpha-cholestan-3beta-ol + oxidized [NADPH--hemoprotein reductase] + H2O + H(+). The enzyme catalyses lathosterol + reduced [NADPH--hemoprotein reductase] + O2 = 5alpha-cholestan-7-oxo-3beta-ol + oxidized [NADPH--hemoprotein reductase] + H2O + H(+). It catalyses the reaction 7-dehydrocholesterol + reduced [NADPH--hemoprotein reductase] + O2 = 7-oxocholesterol + oxidized [NADPH--hemoprotein reductase] + H2O + H(+). It carries out the reaction (24S)-hydroxycholesterol + reduced [NADPH--hemoprotein reductase] + O2 = (24S)-7alpha-dihydroxycholesterol + oxidized [NADPH--hemoprotein reductase] + H2O + H(+). The catalysed reaction is (24R)-hydroxycholesterol + reduced [NADPH--hemoprotein reductase] + O2 = (24R)-7alpha-dihydroxycholesterol + oxidized [NADPH--hemoprotein reductase] + H2O + H(+). The protein operates within lipid metabolism; bile acid biosynthesis. It participates in steroid metabolism; cholesterol degradation. A cytochrome P450 monooxygenase involved in the metabolism of endogenous cholesterol and its oxygenated derivatives (oxysterols). Mechanistically, uses molecular oxygen inserting one oxygen atom into a substrate, and reducing the second into a water molecule, with two electrons provided by NADPH via cytochrome P450 reductase (CPR; NADPH-ferrihemoprotein reductase). Functions as a critical regulatory enzyme of bile acid biosynthesis and cholesterol homeostasis. Catalyzes the hydroxylation of carbon hydrogen bond at 7-alpha position of cholesterol, a rate-limiting step in cholesterol catabolism and bile acid biosynthesis. 7-alpha hydroxylates several oxysterols, including 4beta-hydroxycholesterol and 24-hydroxycholesterol. Catalyzes the oxidation of the 7,8 double bond of 7-dehydrocholesterol and lathosterol with direct and predominant formation of the 7-keto derivatives. This Sus scrofa (Pig) protein is Cytochrome P450 7A1 (CYP7A1).